A 391-amino-acid polypeptide reads, in one-letter code: GTPase HflX (391 aa).

The interval 162–181 (LAQQRGGAKGTRGASRGAGE) is disordered. Residues 222–391 (KIGAIVGYTN…KITDIIIFDK (170 aa)) form the Hflx-type G domain. Residues 228–235 (GYTNAGKS), 253–257 (FATLD), 278–281 (DTVG), 344–347 (NKMD), and 369–371 (SVT) each bind GTP. 2 residues coordinate Mg(2+): serine 235 and threonine 255.

This sequence belongs to the TRAFAC class OBG-HflX-like GTPase superfamily. HflX GTPase family. Monomer. Associates with the 50S ribosomal subunit. Requires Mg(2+) as cofactor.

Its subcellular location is the cytoplasm. In terms of biological role, GTPase that associates with the 50S ribosomal subunit and may have a role during protein synthesis or ribosome biogenesis. This Treponema denticola (strain ATCC 35405 / DSM 14222 / CIP 103919 / JCM 8153 / KCTC 15104) protein is GTPase HflX.